The following is a 1336-amino-acid chain: Cytokinesis protein sepH (1336 aa).

A compositionally biased stretch (low complexity) spans 1–10 (MVSRSSETSE). The segment at 1 to 46 (MVSRSSETSEGPPPPSKIPGTPAKTRLSRLNSSPAKQDKPKDDRVV) is disordered. A compositionally biased stretch (basic and acidic residues) spans 36 to 46 (KQDKPKDDRVV). The Protein kinase domain maps to 59 to 309 (YQLGDCLGKG…ARKLLKHPWI (251 aa)). Residues 65–73 (LGKGAFGSV) and Lys88 contribute to the ATP site. The Proton acceptor role is filled by Asp181. A disordered region spans residues 368–402 (SRYTPTKDILPSPVSKHVTDRFRSPDSTEEDNWDD). The segment covering 384–393 (HVTDRFRSPD) has biased composition (basic and acidic residues). A coiled-coil region spans residues 654-682 (AQLEEGLDEVDLEANIARDKYARLRGQVE). The span at 1194-1205 (ERSESFSLEKRK) shows a compositional bias: basic and acidic residues. Residues 1194-1336 (ERSESFSLEK…PTHADSDWAS (143 aa)) are disordered. Positions 1213 to 1236 (TSTTPPGYLANQSAPATPQINRFN) are enriched in polar residues. Low complexity-rich tracts occupy residues 1253-1264 (PSLSSSALALRP) and 1272-1285 (PSLS…AGPS). Positions 1315-1327 (SRRRSILPQRRRP) are enriched in basic residues.

It belongs to the protein kinase superfamily. Ser/Thr protein kinase family. CDC7 subfamily. Requires Mg(2+) as cofactor.

It carries out the reaction L-seryl-[protein] + ATP = O-phospho-L-seryl-[protein] + ADP + H(+). The catalysed reaction is L-threonyl-[protein] + ATP = O-phospho-L-threonyl-[protein] + ADP + H(+). Functionally, required for early events during cytokinesis including localization of cytoskeletal components to the cytokinetic ring. This Aspergillus niger (strain ATCC MYA-4892 / CBS 513.88 / FGSC A1513) protein is Cytokinesis protein sepH.